The primary structure comprises 85 residues: MAFKKKFTPKKKFCRFCANKNLPVDYKRPDILKDFITDRGKIIARRITGTCAKCQRRLTLEIKRARQMALLYYTATHSAEHLKKM.

This sequence belongs to the bacterial ribosomal protein bS18 family. As to quaternary structure, part of the 30S ribosomal subunit. Forms a tight heterodimer with protein bS6.

In terms of biological role, binds as a heterodimer with protein bS6 to the central domain of the 16S rRNA, where it helps stabilize the platform of the 30S subunit. The protein is Small ribosomal subunit protein bS18 of Solidesulfovibrio magneticus (strain ATCC 700980 / DSM 13731 / RS-1) (Desulfovibrio magneticus).